The sequence spans 166 residues: Endoribonuclease YbeY (166 aa).

Residues His136, His140, and His146 each contribute to the Zn(2+) site.

It belongs to the endoribonuclease YbeY family. Zn(2+) is required as a cofactor.

It localises to the cytoplasm. In terms of biological role, single strand-specific metallo-endoribonuclease involved in late-stage 70S ribosome quality control and in maturation of the 3' terminus of the 16S rRNA. The protein is Endoribonuclease YbeY of Synechococcus sp. (strain CC9605).